We begin with the raw amino-acid sequence, 234 residues long: uncharacterized protein (234 aa).

Positions 212-234 are disordered; the sequence is GKHLKLDSNTTENKTTKQNETGG. The span at 220-234 shows a compositional bias: low complexity; it reads NTTENKTTKQNETGG.

This is an uncharacterized protein from Methanothermobacter thermautotrophicus (Methanobacterium thermoformicicum).